The following is a 251-amino-acid chain: Phosphosulfolactate synthase (251 aa).

This sequence belongs to the phosphosulfolactate synthase family. Homotrimer. Requires Mg(2+) as cofactor.

The enzyme catalyses (2R)-O-phospho-3-sulfolactate = phosphoenolpyruvate + sulfite + H(+). It functions in the pathway cofactor biosynthesis; coenzyme M biosynthesis; sulfoacetaldehyde from phosphoenolpyruvate and sulfite: step 1/4. Catalyzes the addition of sulfite to phosphoenolpyruvate (PEP) to yield (2R)-phospho-3-sulfolactate (PSL). The protein is Phosphosulfolactate synthase (comA) of Methanocaldococcus jannaschii (strain ATCC 43067 / DSM 2661 / JAL-1 / JCM 10045 / NBRC 100440) (Methanococcus jannaschii).